The chain runs to 202 residues: Imidazoleglycerol-phosphate dehydratase (202 aa).

Belongs to the imidazoleglycerol-phosphate dehydratase family.

The protein localises to the cytoplasm. It catalyses the reaction D-erythro-1-(imidazol-4-yl)glycerol 3-phosphate = 3-(imidazol-4-yl)-2-oxopropyl phosphate + H2O. Its pathway is amino-acid biosynthesis; L-histidine biosynthesis; L-histidine from 5-phospho-alpha-D-ribose 1-diphosphate: step 6/9. In Nocardioides sp. (strain ATCC BAA-499 / JS614), this protein is Imidazoleglycerol-phosphate dehydratase.